A 1447-amino-acid polypeptide reads, in one-letter code: Regulator of G-protein signaling 12 (1447 aa).

The disordered stretch occupies residues 1–21 (MFRAGEASKRPLPGPSPPRVR). The 77-residue stretch at 22–98 (SVEVARGRAG…GVLHMVIAEG (77 aa)) folds into the PDZ domain. Phosphoserine is present on residues S172 and S195. K196 participates in a covalent cross-link: Glycyl lysine isopeptide (Lys-Gly) (interchain with G-Cter in SUMO2). The region spanning 228–340 (VAMIVGYLGS…GALRTSCHVF (113 aa)) is the PID domain. Disordered regions lie at residues 410–429 (ADAH…IGNF) and 443–482 (LGGS…DPEG). Polar residues predominate over residues 413-425 (HQNNSTSSNSDSG). A compositionally biased stretch (gly residues) spans 451–464 (GPGGSAWDGVGGRG). R524 and R633 each carry omega-N-methylarginine. The segment at 618 to 652 (NVRKTKEDKKGSKFGRGTGLTQPSQRTSARRSFGR) is disordered. Phosphoserine occurs at positions 661 and 671. Positions 715–832 (SFERLLQDPV…LKSPLYQECI (118 aa)) constitute an RGS domain. Positions 843–853 (DSQQVPSSPAS) are enriched in polar residues. The disordered stretch occupies residues 843 to 941 (DSQQVPSSPA…RESQGSVSSA (99 aa)). Phosphoserine is present on residues S850 and S879. Residues 914-923 (EHGDHADDAL) show a composition bias toward basic and acidic residues. At S943 the chain carries Phosphoserine. 2 RBD domains span residues 962–1032 (KHCC…LEKR) and 1034–1104 (LFRL…LEEK). The segment covering 1103–1117 (EKDPSRGKASADKQK) has biased composition (basic and acidic residues). The interval 1103–1169 (EKDPSRGKAS…RDPRLSKREE (67 aa)) is disordered. A compositionally biased stretch (polar residues) spans 1122–1136 (KQNTAVNSSSRNHSA). Residues 1151 to 1169 (IKGENGKNARDPRLSKREE) are compositionally biased toward basic and acidic residues. The GoLoco domain maps to 1187-1209 (AEEFFELISKAQSNRADDQRGLL). Residues 1240–1447 (GFSKRSATGN…KTSAHHATFV (208 aa)) form a disordered region. Over residues 1244 to 1258 (RSATGNGRESASQPG) the composition is skewed to polar residues. Composition is skewed to low complexity over residues 1267-1280 (SSDS…SASS) and 1289-1298 (PPGQKSPSGP). Polar residues predominate over residues 1301-1313 (TPQSPVSLAQEGT).

In terms of assembly, interacts with GNAI1. Interacts with GNAI2 and GNAI3; the interactions are GDP-dependent. In terms of tissue distribution, isoform 3 is brain specific.

The protein resides in the nucleus. Its subcellular location is the cytoplasm. The protein localises to the cell projection. It localises to the dendrite. It is found in the synapse. The protein resides in the nucleus matrix. Regulates G protein-coupled receptor signaling cascades. Inhibits signal transduction by increasing the GTPase activity of G protein alpha subunits, thereby driving them into their inactive GDP-bound form. Its function is as follows. Behaves as a cell cycle-dependent transcriptional repressor, promoting inhibition of S-phase DNA synthesis. This chain is Regulator of G-protein signaling 12 (RGS12), found in Homo sapiens (Human).